The sequence spans 183 residues: Inner membrane-spanning protein YciB (183 aa).

The next 5 helical transmembrane spans lie at 19 to 39 (LYGV…QLIV), 53 to 73 (IMGI…DLNF), 76 to 96 (WKVT…QFVF), 121 to 141 (LGWA…SYYF), and 151 to 171 (TFGF…YLYP).

This sequence belongs to the YciB family.

It is found in the cell inner membrane. Functionally, plays a role in cell envelope biogenesis, maintenance of cell envelope integrity and membrane homeostasis. In Actinobacillus pleuropneumoniae serotype 7 (strain AP76), this protein is Inner membrane-spanning protein YciB.